We begin with the raw amino-acid sequence, 772 residues long: Cellulosomal-scaffolding protein B (772 aa).

One can recognise a Cohesin 1 domain in the interval 1-80 (DPSKSFDSAI…TTFVAGGVNL (80 aa)). The segment at 81 to 93 (GSSVPTTQPNVPS) is linker (Pro/Thr-rich). Positions 94–240 (DGVVVEIGKV…VNVGNATPTK (147 aa)) constitute a Cohesin 2 domain. Over residues 235-276 (NATPTKGATPTNTATPTKSATATPPGHSVPTNTPTNTPANTP) the composition is skewed to low complexity. 2 disordered regions span residues 235–277 (NATP…NTPV) and 438–464 (VVPSTQPVTTPPATTKPPATTIPPSDD). The linker (Pro/Thr-rich) stretch occupies residues 241-272 (GATPTNTATPTKSATATPPGHSVPTNTPTNTP). The region spanning 277-435 (VSGNLKVEFY…GVLVWGKEPG (159 aa)) is the CBM3 domain. The segment covering 438 to 461 (VVPSTQPVTTPPATTKPPATTIPP) has biased composition (low complexity). Residues 440–461 (PSTQPVTTPPATTKPPATTIPP) form a linker (Pro/Thr-rich) region. One can recognise a Cohesin 3 domain in the interval 462 to 607 (SDDPNAIKIK…ETDLINGGVL (146 aa)). The Dockerin domain occupies 704–771 (IMMWVGDIVK…FGATSSDYDA (68 aa)).

O-glycosylated on most but not all Thr residues of the linker units.

Its subcellular location is the secreted. Acts as a scaffolding protein in the cellulosome. It promotes binding of cellulose to the catalytic domains of the cellulolytic enzymes probably through the binding of the nine repeated domains with dockerin domains present in catalytic subunits of the cellulosome. This chain is Cellulosomal-scaffolding protein B (cipB), found in Acetivibrio thermocellus (Hungateiclostridium thermocellum).